Consider the following 227-residue polypeptide: UPF0173 metal-dependent hydrolase BT9727_4343 (227 aa).

Belongs to the UPF0173 family.

The polypeptide is UPF0173 metal-dependent hydrolase BT9727_4343 (Bacillus thuringiensis subsp. konkukian (strain 97-27)).